The primary structure comprises 175 residues: 3-hydroxydecanoyl-[acyl-carrier-protein] dehydratase (175 aa).

H71 is an active-site residue.

It belongs to the thioester dehydratase family. FabA subfamily. Homodimer.

It is found in the cytoplasm. The catalysed reaction is a (3R)-hydroxyacyl-[ACP] = a (2E)-enoyl-[ACP] + H2O. It catalyses the reaction (3R)-hydroxydecanoyl-[ACP] = (2E)-decenoyl-[ACP] + H2O. The enzyme catalyses (2E)-decenoyl-[ACP] = (3Z)-decenoyl-[ACP]. Its pathway is lipid metabolism; fatty acid biosynthesis. Functionally, necessary for the introduction of cis unsaturation into fatty acids. Catalyzes the dehydration of (3R)-3-hydroxydecanoyl-ACP to E-(2)-decenoyl-ACP and then its isomerization to Z-(3)-decenoyl-ACP. Can catalyze the dehydratase reaction for beta-hydroxyacyl-ACPs with saturated chain lengths up to 16:0, being most active on intermediate chain length. The sequence is that of 3-hydroxydecanoyl-[acyl-carrier-protein] dehydratase from Rhodopseudomonas palustris (strain ATCC BAA-98 / CGA009).